Here is a 664-residue protein sequence, read N- to C-terminus: Armadillo repeat protein involved in nucleocytoplasmic transport Syo2 (664 aa).

Residues 77–119 form an ARM repeat; the sequence is GLVSKLIDRISDDSVEVVVEATGALRNLAIEEGYSICMDMYRK.

The protein belongs to the nuclear import and ribosome assembly adapter family. In terms of assembly, forms a heterotrimeric complex with rpl5 and rpl11a or rpl11b; interaction of this complex with kap104 allows the nuclear import of the heterotrimer. Component of a hexameric 5S RNP precursor complex; this complex acts as a precursor for ribosome assembly.

It is found in the cytoplasm. The protein resides in the nucleus. Nuclear import adapter that specifically recruits the two functionally and topologically linked ribosomal proteins rpl5 and rpl11 (encoded by rpl11a and rpl11b). Guarantees that this cargo pair remains bound together from the time of synthesis in the cytoplasm until delivery to the nascent 5S rRNA in the nucleus. The polypeptide is Armadillo repeat protein involved in nucleocytoplasmic transport Syo2 (Schizosaccharomyces pombe (strain 972 / ATCC 24843) (Fission yeast)).